A 192-amino-acid chain; its full sequence is Probable GTP-binding protein EngB (192 aa).

Residues 22-192 (GRPEIVFVGR…LLASIDTFTQ (171 aa)) form the EngB-type G domain. Residues 30–37 (GRSNVGKS), 57–61 (GKTRL), 75–78 (DLPG), 142–145 (TKWD), and 172–174 (YSS) each bind GTP. Mg(2+) is bound by residues S37 and T59.

This sequence belongs to the TRAFAC class TrmE-Era-EngA-EngB-Septin-like GTPase superfamily. EngB GTPase family. The cofactor is Mg(2+).

Necessary for normal cell division and for the maintenance of normal septation. This chain is Probable GTP-binding protein EngB, found in Chlorobaculum tepidum (strain ATCC 49652 / DSM 12025 / NBRC 103806 / TLS) (Chlorobium tepidum).